The following is a 412-amino-acid chain: Putative membrane protein 337L (412 aa).

N-linked (GlcNAc...) asparagine; by host glycosylation is found at N171, N186, N247, and N271. The helical transmembrane segment at V387 to F407 threads the bilayer.

It belongs to the IIV-6 337L family.

The protein resides in the virion membrane. The chain is Putative membrane protein 337L from Acheta domesticus (House cricket).